We begin with the raw amino-acid sequence, 860 residues long: Leucine--tRNA ligase (860 aa).

The short motif at 42–52 is the 'HIGH' region element; sequence PYPSGRLHMGH. The 'KMSKS' region signature appears at 619–623; that stretch reads KMSKS. Residue lysine 622 participates in ATP binding.

It belongs to the class-I aminoacyl-tRNA synthetase family.

Its subcellular location is the cytoplasm. It carries out the reaction tRNA(Leu) + L-leucine + ATP = L-leucyl-tRNA(Leu) + AMP + diphosphate. This is Leucine--tRNA ligase from Shigella sonnei (strain Ss046).